Consider the following 186-residue polypeptide: TATA-box-binding protein E (186 aa).

Tandem repeats lie at residues 10-86 (IENV…FDKL) and 101-179 (VQNI…TSRL).

This sequence belongs to the TBP family.

In terms of biological role, general factor that plays a role in the activation of archaeal genes transcribed by RNA polymerase. Binds specifically to the TATA box promoter element which lies close to the position of transcription initiation. This chain is TATA-box-binding protein E (tbpE), found in Halobacterium salinarum (strain ATCC 700922 / JCM 11081 / NRC-1) (Halobacterium halobium).